Consider the following 361-residue polypeptide: DNA polymerase IV 3 (361 aa).

The UmuC domain maps to 12–192; the sequence is IIHVDMDAFY…LPVNKFHGVG (181 aa). Residues D16 and D110 each coordinate Mg(2+). E111 is a catalytic residue.

This sequence belongs to the DNA polymerase type-Y family. As to quaternary structure, monomer. Mg(2+) is required as a cofactor.

It localises to the cytoplasm. The catalysed reaction is DNA(n) + a 2'-deoxyribonucleoside 5'-triphosphate = DNA(n+1) + diphosphate. Its function is as follows. Poorly processive, error-prone DNA polymerase involved in untargeted mutagenesis. Copies undamaged DNA at stalled replication forks, which arise in vivo from mismatched or misaligned primer ends. These misaligned primers can be extended by PolIV. Exhibits no 3'-5' exonuclease (proofreading) activity. May be involved in translesional synthesis, in conjunction with the beta clamp from PolIII. The chain is DNA polymerase IV 3 (dinB3) from Mesorhizobium japonicum (strain LMG 29417 / CECT 9101 / MAFF 303099) (Mesorhizobium loti (strain MAFF 303099)).